A 128-amino-acid chain; its full sequence is Large ribosomal subunit protein uL22 (128 aa).

The protein belongs to the universal ribosomal protein uL22 family. Part of the 50S ribosomal subunit.

In terms of biological role, this protein binds specifically to 23S rRNA; its binding is stimulated by other ribosomal proteins, e.g. L4, L17, and L20. It is important during the early stages of 50S assembly. It makes multiple contacts with different domains of the 23S rRNA in the assembled 50S subunit and ribosome. Functionally, the globular domain of the protein is located near the polypeptide exit tunnel on the outside of the subunit, while an extended beta-hairpin is found that lines the wall of the exit tunnel in the center of the 70S ribosome. This is Large ribosomal subunit protein uL22 from Prochlorococcus marinus (strain MIT 9515).